The chain runs to 111 residues: Ribosome-binding factor A (111 aa).

Belongs to the RbfA family. In terms of assembly, monomer. Binds 30S ribosomal subunits, but not 50S ribosomal subunits or 70S ribosomes.

It is found in the cytoplasm. Its function is as follows. One of several proteins that assist in the late maturation steps of the functional core of the 30S ribosomal subunit. Associates with free 30S ribosomal subunits (but not with 30S subunits that are part of 70S ribosomes or polysomes). Required for efficient processing of 16S rRNA. May interact with the 5'-terminal helix region of 16S rRNA. The sequence is that of Ribosome-binding factor A from Helicobacter pylori (strain P12).